We begin with the raw amino-acid sequence, 184 residues long: Chaperone protein dnaJ 72 (184 aa).

One can recognise a J domain in the interval 3–73 (DHYQVLGVTR…LKRASYNAGS (71 aa)). Residues 133–150 (FLLNLALAGGLYFAFTAI) traverse the membrane as a helical segment.

The protein belongs to the DnaJ family. C/III subfamily.

The protein resides in the membrane. Functionally, plays a continuous role in plant development probably in the structural organization of compartments. This chain is Chaperone protein dnaJ 72 (ATJ72), found in Arabidopsis thaliana (Mouse-ear cress).